Reading from the N-terminus, the 444-residue chain is EMI domain-containing protein 1 (444 aa).

Positions 1–22 (MGGPRAWTLLCLGLLLPGGGAA) are cleaved as a signal peptide. Positions 33–106 (RRNWCSYVVT…PGHSGVTCEE (74 aa)) constitute an EMI domain. 3 disulfides stabilise this stretch: cysteine 37–cysteine 96, cysteine 62–cysteine 68, and cysteine 95–cysteine 104. Threonine 42 is a glycosylation site (O-linked (Fuc) threonine). Asparagine 51 carries N-linked (GlcNAc...) asparagine glycosylation. An N-linked (GlcNAc...) asparagine glycan is attached at asparagine 136. Disordered regions lie at residues 161–374 (EQTV…KSHW) and 404–444 (PDLG…SERS). The 151-residue stretch at 221 to 371 (GPPGPQGPPG…PGPKGDPGEK (151 aa)) folds into the Collagen-like domain. Residues 222 to 231 (PPGPQGPPGR) are compositionally biased toward pro residues. Positions 232–243 (PGQTGAAGTPGK) are enriched in low complexity. 2 stretches are compositionally biased toward pro residues: residues 244–264 (MGPPGPPGPPGPPGPPAPVGP) and 292–311 (PTGPPGPPGPPGPMGPPGLP).

Homo- or heteromers. Post-translationally, O-fucosylated at Thr-42 within the EMI domain by FUT10/POFUT3 and FUT11/POFUT4.

The protein localises to the secreted. Its subcellular location is the extracellular space. It localises to the extracellular matrix. This chain is EMI domain-containing protein 1 (Emid1), found in Mus musculus (Mouse).